Consider the following 557-residue polypeptide: Formate--tetrahydrofolate ligase (557 aa).

ATP is bound at residue 67-74; sequence TPAGEGKT.

This sequence belongs to the formate--tetrahydrofolate ligase family.

The catalysed reaction is (6S)-5,6,7,8-tetrahydrofolate + formate + ATP = (6R)-10-formyltetrahydrofolate + ADP + phosphate. It participates in one-carbon metabolism; tetrahydrofolate interconversion. The chain is Formate--tetrahydrofolate ligase from Cereibacter sphaeroides (strain KD131 / KCTC 12085) (Rhodobacter sphaeroides).